The primary structure comprises 483 residues: Isocitrate dehydrogenase [NADP] (483 aa).

Residue Thr74 coordinates NADP(+). D-threo-isocitrate-binding residues include Ser83, Asn85, Arg89, Arg99, and Arg121. Residue Asp232 participates in Mg(2+) binding. Residues 264–270 (HGSAPDI) and Asn277 contribute to the NADP(+) site.

The protein belongs to the isocitrate and isopropylmalate dehydrogenases family. In terms of assembly, homodimer. The cofactor is Mg(2+). Requires Mn(2+) as cofactor.

It catalyses the reaction D-threo-isocitrate + NADP(+) = 2-oxoglutarate + CO2 + NADPH. In terms of biological role, catalyzes the oxidative decarboxylation of isocitrate to 2-oxoglutarate and carbon dioxide with the concomitant reduction of NADP(+). The sequence is that of Isocitrate dehydrogenase [NADP] (icd) from Rickettsia conorii (strain ATCC VR-613 / Malish 7).